A 308-amino-acid polypeptide reads, in one-letter code: Peptidyl-prolyl cis-trans isomerase CYP8 (308 aa).

In terms of domain architecture, PPIase cyclophilin-type spans 56-215; sequence FTDPESSEEA…QPITIGYISS (160 aa).

It catalyses the reaction [protein]-peptidylproline (omega=180) = [protein]-peptidylproline (omega=0). In terms of biological role, PPIases accelerate the folding of proteins. It catalyzes the cis-trans isomerization of proline imidic peptide bonds in oligopeptides. The protein is Peptidyl-prolyl cis-trans isomerase CYP8 (CPR8) of Saccharomyces cerevisiae (strain ATCC 204508 / S288c) (Baker's yeast).